Reading from the N-terminus, the 492-residue chain is ERAD-associated E3 ubiquitin-protein ligase HRD1A (492 aa).

The Cytoplasmic portion of the chain corresponds to 1–3; the sequence is MIR. A helical membrane pass occupies residues 4–24; sequence LRTYAGLSFMATLAVIYHAFS. Topologically, residues 25-40 are lumenal; it reads SRGQFYPATVYLSTSK. A helical transmembrane segment spans residues 41 to 61; the sequence is ISLVLLLNMCLVLMLSLWHLV. Over 62–98 the chain is Cytoplasmic; it reads KFVFLGSLREAEVERLNEQAWRELMEILFAITIFRQD. The helical transmembrane segment at 99-119 threads the bilayer; sequence FSSGFLPLVVTLLLIKALHWL. Over 120 to 135 the chain is Lumenal; the sequence is AQKRVEYIETTPSVSK. The chain crosses the membrane as a helical span at residues 136–156; that stretch reads LSHFRIVSFMGFLLLVDSLFM. Over 157-170 the chain is Cytoplasmic; sequence YSSIRHLIQSRQAS. A helical membrane pass occupies residues 171 to 191; it reads VSLFFSFEYMILATTTVAIFV. Residues 192–221 are Lumenal-facing; it reads KYVFYVTDMLMDGQWEKKPVYTFYLELIRD. Residues 222–242 form a helical membrane-spanning segment; it reads LLHLSMYICFFFVIFMNYGVP. Topologically, residues 243–492 are cytoplasmic; that stretch reads LHLLRELYET…KGKSVADAAE (250 aa). The segment at 292 to 330 adopts an RING-type; atypical zinc-finger fold; that stretch reads CIICREEMTNAKKLICGHLFHVHCLRSWLERQQTCPTCR. Disordered regions lie at residues 339 to 379 and 470 to 492; these read ATSA…NSLS and ETRK…DAAE. Low complexity predominate over residues 351 to 378; it reads QGSQQGTSSSGNQGSEISSSAGVSNNSL. Basic and acidic residues predominate over residues 470–486; that stretch reads ETRKPESAGEPENKGKS.

This sequence belongs to the HRD1 family.

The protein localises to the endoplasmic reticulum membrane. The enzyme catalyses S-ubiquitinyl-[E2 ubiquitin-conjugating enzyme]-L-cysteine + [acceptor protein]-L-lysine = [E2 ubiquitin-conjugating enzyme]-L-cysteine + N(6)-ubiquitinyl-[acceptor protein]-L-lysine.. The protein operates within protein modification; protein ubiquitination. Probable component of the HRD1 ubiquitin ligase complex that mediates the rapid degradation of misfolded endoplasmic reticulum (ER) proteins, a process called ER-associated degradation (ERAD). Targets the misfolded LRR receptor kinase BRI1. Functions redundantly with HRD3B. This chain is ERAD-associated E3 ubiquitin-protein ligase HRD1A, found in Arabidopsis thaliana (Mouse-ear cress).